The chain runs to 84 residues: Anthracycline acyl carrier protein DauA (84 aa).

In terms of domain architecture, Carrier spans 3–80; that stretch reads ELSLAELREI…SMLIFVNERL (78 aa). Ser40 is modified (O-(pantetheine 4'-phosphoryl)serine).

It functions in the pathway antibiotic biosynthesis; daunorubicin biosynthesis. The protein operates within antibiotic biosynthesis; carminomycin biosynthesis. Its pathway is antibiotic biosynthesis; rhodomycin biosynthesis. It participates in antibiotic biosynthesis; aclacinomycin biosynthesis. Functionally, involved in the biosynthesis of aklanonate which is an important precursor common to the formation of the clinically significant anthracyclines such as carminomycin, daunorubicin (daunomycin), rhodomycin, aclacinomycin T (aklavin) and aclacinomycin A (aclarubicin). These compounds are aromatic polyketide antibiotics that exhibit high cytotoxicity and are widely applied in the chemotherapy of a variety of cancers. The protein is Anthracycline acyl carrier protein DauA (dauA) of Streptomyces sp. (strain C5).